A 180-amino-acid chain; its full sequence is Pro-glucagon (180 aa).

The signal sequence occupies residues 1–20 (MKSLYFVAGLFVMLVQGSWQ). Residues 25-35 (NTEEKSSSFPA) show a composition bias toward polar residues. The disordered stretch occupies residues 25–59 (NTEEKSSSFPAPQTDPLGDPDQINEDKRHSQGTFT). The residue at position 54 (S54) is a Phosphoserine. A propeptide spanning residues 84 to 89 (NKNNIA) is cleaved from the precursor. Phosphoserine occurs at positions 105 and 108. Arginine amide is present on R127. Positions 131–145 (DFPEEVNIVEELRRR) are excised as a propeptide. Phosphoserine occurs at positions 150 and 152.

This sequence belongs to the glucagon family. Proglucagon is post-translationally processed in a tissue-specific manner in pancreatic A cells and intestinal L cells. In pancreatic A cells, the major bioactive hormone is glucagon cleaved by PCSK2/PC2. In the intestinal L cells PCSK1/PC1 liberates GLP-1, GLP-2, glicentin and oxyntomodulin. GLP-1 is further N-terminally truncated by post-translational processing in the intestinal L cells resulting in GLP-1(7-37) GLP-1-(7-36)amide. The C-terminal amidation is neither important for the metabolism of GLP-1 nor for its effects on the endocrine pancreas. As to expression, glucagon is secreted in the A cells of the islets of Langerhans. GLP-1, GLP-2, oxyntomodulin and glicentin are secreted from enteroendocrine cells throughout the gastrointestinal tract.

Its subcellular location is the secreted. Functionally, plays a key role in glucose metabolism and homeostasis. Regulates blood glucose by increasing gluconeogenesis and decreasing glycolysis. A counterregulatory hormone of insulin, raises plasma glucose levels in response to insulin-induced hypoglycemia. Plays an important role in initiating and maintaining hyperglycemic conditions in diabetes. Potent stimulator of glucose-dependent insulin release. Also stimulates insulin release in response to IL6. Plays important roles on gastric motility and the suppression of plasma glucagon levels. May be involved in the suppression of satiety and stimulation of glucose disposal in peripheral tissues, independent of the actions of insulin. Has growth-promoting activities on intestinal epithelium. May also regulate the hypothalamic pituitary axis (HPA) via effects on LH, TSH, CRH, oxytocin, and vasopressin secretion. Increases islet mass through stimulation of islet neogenesis and pancreatic beta cell proliferation. Inhibits beta cell apoptosis. In terms of biological role, stimulates intestinal growth and up-regulates villus height in the small intestine, concomitant with increased crypt cell proliferation and decreased enterocyte apoptosis. The gastrointestinal tract, from the stomach to the colon is the principal target for GLP-2 action. Plays a key role in nutrient homeostasis, enhancing nutrient assimilation through enhanced gastrointestinal function, as well as increasing nutrient disposal. Stimulates intestinal glucose transport and decreases mucosal permeability. Its function is as follows. Significantly reduces food intake. Inhibits gastric emptying in humans. Suppression of gastric emptying may lead to increased gastric distension, which may contribute to satiety by causing a sensation of fullness. Functionally, may modulate gastric acid secretion and the gastro-pyloro-duodenal activity. May play an important role in intestinal mucosal growth in the early period of life. This is Pro-glucagon (GCG) from Bos taurus (Bovine).